Reading from the N-terminus, the 211-residue chain is MARKRRAARVKDKWTLKKWFTLIAPEYFGMAELGETPADDASKVVGRTVETTLAELTNDYSNQNTYKKLIFKVYRVAGDNAYTKFWRFELTREYLNSLTRRRTSKIEDIVDVTTADGYKLRVKSVVFTVRRCKTSQKRAIRAIMRQIVVEKASSLNFVQFLQECVLGKVPAEIYKNAKKIYPIRRVEIRKIELLAEPAEAETQPAVAEAVA.

Belongs to the eukaryotic ribosomal protein eS1 family.

This is Small ribosomal subunit protein eS1 from Archaeoglobus fulgidus (strain ATCC 49558 / DSM 4304 / JCM 9628 / NBRC 100126 / VC-16).